Here is a 130-residue protein sequence, read N- to C-terminus: Protein ApaG (130 aa).

The 125-residue stretch at 3–127 (RALTRDIEVT…FSLDSPGLVR (125 aa)) folds into the ApaG domain.

This Rhizobium meliloti (strain 1021) (Ensifer meliloti) protein is Protein ApaG.